Here is a 621-residue protein sequence, read N- to C-terminus: DnaJ homolog subfamily C member 2 (621 aa).

Methionine 1 carries the post-translational modification N-acetylmethionine. An epitope (recognized by CD8(+) cytotoxic T-lymphocytes) region spans residues 23–31 (STLCQVEPV). A phosphoserine mark is found at serine 47, serine 49, serine 60, and serine 63. The J domain occupies 88 to 161 (DHYAVLGLGH…VKRRAFNSVD (74 aa)). Residues 160–250 (VDPTFDNSVP…RDERRWIEKQ (91 aa)) are ZRF1-UBD. Disordered regions lie at residues 294-315 (EKKAKAEAKRKEQEAKEKQRQA) and 426-453 (KEEAEARMRQASKNTEKSTGGGGNGSKN). SANT domains follow at residues 449 to 511 (NGSK…KLDP) and 549 to 604 (TDFT…EMVK).

In terms of assembly, component of ribosome-associated complex (RAC), a heterodimer composed of Hsp70/DnaK-type chaperone HSPA14 and Hsp40/DnaJ-type chaperone DNAJC2. Interacts (via ZRF1-UBD region) with ID1. In terms of processing, phosphorylated in M (mitotic) phase. Widely expressed.

Its subcellular location is the nucleus. It is found in the cytoplasm. The protein resides in the cytosol. Acts both as a chaperone in the cytosol and as a chromatin regulator in the nucleus. When cytosolic, acts as a molecular chaperone: component of the ribosome-associated complex (RAC), a complex involved in folding or maintaining nascent polypeptides in a folding-competent state. In the RAC complex, stimulates the ATPase activity of the ribosome-associated pool of Hsp70-type chaperones HSPA14 that bind to the nascent polypeptide chain. When nuclear, mediates the switching from polycomb-repressed genes to an active state: specifically recruited at histone H2A ubiquitinated at 'Lys-119' (H2AK119ub), and promotes the displacement of the polycomb PRC1 complex from chromatin, thereby facilitating transcription activation. This is DnaJ homolog subfamily C member 2 (DNAJC2) from Homo sapiens (Human).